Consider the following 517-residue polypeptide: RNA-binding region-containing protein 3 (517 aa).

The interval 1–26 is disordered; sequence MAAPEQPLAISRGCTSSSSLSPPRGD. Residues 1–257 are necessary for interaction with PDCD7; the sequence is MAAPEQPLAI…STDDEDRQRM (257 aa). Residue serine 21 is modified to Phosphoserine. The RRM 1 domain maps to 27–102; sequence RTLLVRHLPA…HTLVVEFAKE (76 aa). Disordered regions lie at residues 106-130 and 213-254; these read VHSP…DDKE and MPLH…DEDR. Serine 108 carries the phosphoserine modification. Over residues 115-130 the composition is skewed to basic and acidic residues; sequence SEKKKRSDDPVEDDKE. Residues 211–380 form a necessary for binding to m(7)G-capped U12 snRNA region; the sequence is DYMPLHAPLP…LDITEEIKED (170 aa). Over residues 217-230 the composition is skewed to pro residues; sequence APLPPTSPQPPEEP. Over residues 231–252 the composition is skewed to acidic residues; it reads PLPDEDEELSSEESEYESTDDE. Positions 420–503 constitute an RRM 2 domain; it reads CRIYVKNLAK…KPMVVQFARS (84 aa).

As to quaternary structure, component of the U11/U12 snRNPs that are part of the U12-type spliceosome. Found in a complex with m(7)G-capped U12 snRNA. Interacts with PDCD7. In terms of tissue distribution, highly expressed in pancreas and kidney. Detected at lower levels in heart, brain, placenta, lung, liver, spleen, thymus, prostate, testis, ovary, small intestine, colon and leukocytes.

The protein resides in the nucleus. In terms of biological role, participates in pre-mRNA U12-dependent splicing, performed by the minor spliceosome which removes U12-type introns. U12-type introns comprises less than 1% of all non-coding sequences. Binds to the 3'-stem-loop of m(7)G-capped U12 snRNA. The sequence is that of RNA-binding region-containing protein 3 (RNPC3) from Homo sapiens (Human).